The following is a 429-amino-acid chain: Glutamate-1-semialdehyde 2,1-aminomutase (429 aa).

Lysine 267 is modified (N6-(pyridoxal phosphate)lysine).

Belongs to the class-III pyridoxal-phosphate-dependent aminotransferase family. HemL subfamily. Homodimer. Pyridoxal 5'-phosphate serves as cofactor.

Its subcellular location is the cytoplasm. The enzyme catalyses (S)-4-amino-5-oxopentanoate = 5-aminolevulinate. It functions in the pathway porphyrin-containing compound metabolism; protoporphyrin-IX biosynthesis; 5-aminolevulinate from L-glutamyl-tRNA(Glu): step 2/2. This chain is Glutamate-1-semialdehyde 2,1-aminomutase, found in Xanthomonas campestris pv. campestris (strain 8004).